A 147-amino-acid polypeptide reads, in one-letter code: Large ribosomal subunit protein uL15 (147 aa).

Over residues 1–20 (MTLRLNDLKPADGARTERTR) the composition is skewed to basic and acidic residues. The tract at residues 1 to 61 (MTLRLNDLKP…GFEGGQTPMQ (61 aa)) is disordered. Positions 23–33 (RGIGSGLGKTA) are enriched in gly residues. Residues 34–47 (GRGHKGSFARKGGG) show a composition bias toward basic residues.

The protein belongs to the universal ribosomal protein uL15 family. As to quaternary structure, part of the 50S ribosomal subunit.

In terms of biological role, binds to the 23S rRNA. This Xanthomonas axonopodis pv. citri (strain 306) protein is Large ribosomal subunit protein uL15.